The chain runs to 339 residues: GTP 3',8-cyclase (339 aa).

Residues 13–249 (RYGRPLRDLR…GEVAQRHAFA (237 aa)) form the Radical SAM core domain. GTP is bound at residue arginine 22. The [4Fe-4S] cluster site is built by cysteine 29 and cysteine 33. S-adenosyl-L-methionine is bound at residue tyrosine 35. Cysteine 36 lines the [4Fe-4S] cluster pocket. Arginine 75 serves as a coordination point for GTP. Glycine 79 provides a ligand contact to S-adenosyl-L-methionine. Threonine 106 serves as a coordination point for GTP. S-adenosyl-L-methionine is bound at residue serine 130. Lysine 168 serves as a coordination point for GTP. Methionine 202 provides a ligand contact to S-adenosyl-L-methionine. [4Fe-4S] cluster is bound by residues cysteine 266 and cysteine 269. 271-273 (RAR) is a GTP binding site. Cysteine 283 is a [4Fe-4S] cluster binding site.

The protein belongs to the radical SAM superfamily. MoaA family. Monomer and homodimer. [4Fe-4S] cluster is required as a cofactor.

The enzyme catalyses GTP + AH2 + S-adenosyl-L-methionine = (8S)-3',8-cyclo-7,8-dihydroguanosine 5'-triphosphate + 5'-deoxyadenosine + L-methionine + A + H(+). It participates in cofactor biosynthesis; molybdopterin biosynthesis. Its function is as follows. Catalyzes the cyclization of GTP to (8S)-3',8-cyclo-7,8-dihydroguanosine 5'-triphosphate. This Xanthomonas campestris pv. campestris (strain B100) protein is GTP 3',8-cyclase.